We begin with the raw amino-acid sequence, 20 residues long: RGSNLTHPLRNIGDLFYVGN.

Residues Asn4 and Asn20 are each glycosylated (N-linked (GlcNAc...) asparagine).

Belongs to the peptidase A1 family. Chorionic epithelium (trophectoderm) and placental cotyledons.

Its subcellular location is the secreted. It localises to the extracellular space. The polypeptide is Pregnancy-associated glycoprotein 67A (Bison bonasus (European bison)).